We begin with the raw amino-acid sequence, 727 residues long: Platelet endothelial cell adhesion molecule (727 aa).

A signal peptide spans 1–17 (MLLALGLTLVLYASLQA). Over 18 to 590 (EENSFTINSI…VRVFLAPWKK (573 aa)) the chain is Extracellular. 6 Ig-like C2-type domains span residues 40 to 126 (GQQL…PKVT), 135 to 213 (GGVV…PIRS), 225 to 309 (PKFE…IMVN), 315 to 391 (PKPK…LVPI), 413 to 472 (GHAI…NCHS), and 488 to 578 (PVDE…RSST). A disulfide bridge connects residues Cys-47 and Cys-99. 2 N-linked (GlcNAc...) asparagine glycosylation sites follow: Asn-74 and Asn-141. 2 disulfides stabilise this stretch: Cys-142–Cys-195 and Cys-245–Cys-293. N-linked (GlcNAc...) asparagine glycosylation is found at Asn-309, Asn-345, Asn-360, Asn-424, and Asn-540. Cystine bridges form between Cys-336-Cys-375, Cys-420-Cys-465, and Cys-512-Cys-561. The chain crosses the membrane as a helical span at residues 591-609 (GLIAVVVIGVVIATLIVAA). At 610 to 727 (KCYFLRKAKA…SRTEGSLNGT (118 aa)) the chain is on the cytoplasmic side. Cys-611 carries S-palmitoyl cysteine lipidation. The segment at 642–672 (SEPSVEANSHYGYDDVSGNDAVKPINQNKDP) is disordered. Short sequence motifs (ITIM motif) lie at residues 677 to 682 (VEYTEV) and 700 to 705 (TVYSEI). Phosphotyrosine; by FER occurs at positions 679 and 702. Residues 698–718 (TETVYSEIRKVDPNLMENRYS) are membrane-bound segment which detaches upon phosphorylation. The interval 710 to 727 (PNLMENRYSRTEGSLNGT) is may play a role in cytoprotective signaling. 2 positions are modified to phosphoserine: Ser-718 and Ser-723.

Trans-homodimer (via Ig-like C2-type 1 and Ig-like C2-type 2 domains); trans-homodimerization is required for cell-cell interaction. Forms a complex with BDKRB2 and GNAQ. Interacts with BDKRB2 and GNAQ. Interacts with PTPN11; Tyr-702 is critical for PTPN11 recruitment. Interacts with FER. Interacts with CD177; the interaction is Ca(2+)-dependent; the interaction is direct. Post-translationally, phosphorylated on Ser and Tyr residues by src kinases after cellular activation. Upon activation, phosphorylated on Ser-718 which probably initiates the dissociation of the membrane-interaction segment (residues 698-718) from the cell membrane allowing the sequential phosphorylation of Tyr-702 and Tyr-679. Constitutively phosphorylated on Ser-723 in resting platelets. Phosphorylated on tyrosine residues by FER and FES in response to FCER1 activation. In endothelial cells Fyn mediates mechanical-force (stretch or pull) induced tyrosine phosphorylation. In terms of processing, palmitoylation by ZDHHC21 is necessary for cell surface expression in endothelial cells and enrichment in membrane rafts. Expressed in lung and platelets (at protein level).

Its subcellular location is the cell membrane. The protein localises to the membrane raft. The protein resides in the cell junction. Cell adhesion molecule which is required for leukocyte transendothelial migration (TEM) under most inflammatory conditions. Tyr-679 plays a critical role in TEM and is required for efficient trafficking of PECAM1 to and from the lateral border recycling compartment (LBRC) and is also essential for the LBRC membrane to be targeted around migrating leukocytes. Trans-homophilic interaction may play a role in endothelial cell-cell adhesion via cell junctions. Heterophilic interaction with CD177 plays a role in transendothelial migration of neutrophils. Homophilic ligation of PECAM1 prevents macrophage-mediated phagocytosis of neighboring viable leukocytes by transmitting a detachment signal. Promotes macrophage-mediated phagocytosis of apoptotic leukocytes by tethering them to the phagocytic cells; PECAM1-mediated detachment signal appears to be disabled in apoptotic leukocytes. Modulates bradykinin receptor BDKRB2 activation. Regulates bradykinin- and hyperosmotic shock-induced ERK1/2 activation in endothelial cells. Induces susceptibility to atherosclerosis. The protein is Platelet endothelial cell adhesion molecule (Pecam1) of Mus musculus (Mouse).